The chain runs to 360 residues: Alpha-N-acetyl-neuraminyl-2,3-beta-galactosyl-1,3-N-acetyl-galactosaminide alpha-2,6-sialyltransferase (360 aa).

Residues M1–C71 are Cytoplasmic-facing. The helical; Signal-anchor for type II membrane protein transmembrane segment at I72–T94 threads the bilayer. Topologically, residues C95 to K360 are lumenal. Cysteines 134 and 283 form a disulfide. An N-linked (GlcNAc...) asparagine glycan is attached at N193.

Belongs to the glycosyltransferase 29 family. High expression in brain and colon and to a lesser extent in lung, heart, kidney, spleen and thymus.

The protein resides in the golgi apparatus membrane. It catalyses the reaction an alpha-Neu5Ac-(2-&gt;3)-beta-D-Gal-(1-&gt;3)-D-GlcNAc derivative + CMP-N-acetyl-beta-neuraminate = an alpha-Neu5Ac-(2-&gt;3)-beta-D-Gal-(1-&gt;3)-[alpha-Neu5Ac-(2-&gt;6)]-D-GlcNAc derivative + CMP + H(+). The catalysed reaction is N-acetyl-alpha-neuraminosyl-(2-&gt;3)-beta-D-galactosyl-(1-&gt;3)-N-acetyl-D-galactosamine + CMP-N-acetyl-beta-neuraminate = N-acetyl-alpha-neuraminosyl-(2-&gt;3)-beta-D-galactosyl-(1-&gt;3)-[N-acetyl-alpha-neuraminosyl-(2-&gt;6)]-N-acetyl-D-galactosamine + CMP + H(+). The enzyme catalyses a ganglioside GM1b (d18:1(4E)) + CMP-N-acetyl-beta-neuraminate = a ganglioside GD1alpha (d18:1(4E)) + CMP + H(+). It carries out the reaction 3-O-[alpha-Neu5Ac-(2-&gt;3)-beta-D-Gal-(1-&gt;3)-alpha-D-GalNAc]-L-Ser-[protein] + CMP-N-acetyl-beta-neuraminate = a 3-O-{alpha-Neu5Ac-(2-&gt;3)-beta-D-Gal-(1-&gt;3)-[alpha-Neu5Ac-(2-&gt;6)]-alpha-D-GalNAc}-L-seryl-[protein] + CMP + H(+). It catalyses the reaction 3-O-[alpha-Neu5Ac-(2-&gt;3)-beta-D-Gal-(1-&gt;3)-alpha-D-GalNAc]-L-Thr-[protein] + CMP-N-acetyl-beta-neuraminate = a 3-O-{alpha-Neu5Ac-(2-&gt;3)-beta-D-Gal-(1-&gt;3)-[alpha-Neu5Ac-(2-&gt;6)]-alpha-D-GalNAc}-L-threonyl-[protein] + CMP + H(+). It participates in protein modification; protein glycosylation. The protein operates within glycolipid biosynthesis. In terms of biological role, transfers the sialyl group (N-acetyl-alpha-neuraminyl or NeuAc) from CMP-NeuAc to the GalNAc residue on the NeuAc-alpha-2,3-Gal-beta-1,3-GalNAc sequence of glycoproteins and glycolipids forming an alpha-2,6-linkage. Produces branched type disialyl structures by transfer of a sialyl group onto a GalNAc residue inside the backbone core chains. Prefers O-glycans to glycoproteins or glycolipids. This Mus musculus (Mouse) protein is Alpha-N-acetyl-neuraminyl-2,3-beta-galactosyl-1,3-N-acetyl-galactosaminide alpha-2,6-sialyltransferase (St6galnac4).